The primary structure comprises 1648 residues: MAGGRGASGRGRAEPQESYSQRQDHELQALEAIYGSDFQDLRPDARGRVREPPEINLVLYPQGLAGEEVYVQVELQVKCPPTYPDVVPEIELKNAKGLSNESVNLLKSHLEELAKKQCGEVMIFELAHHVQSFLSEHNKPPPKSFHEEMLERQAQEKQQRLLEARRKEEQEQREILHEIQRRKEEIKEEKKRKEMAKQERLEITSLTNQDYASKRDPAGHRAAAILHGGSPDFVGNGKARTYSSGRSRRERQYSVCSGEPSPGSCDILHFSVGSPDQLMVHKGRCVGSDEQLGKVVYNALETATGSFVLLHEWVLQWQKMGPCLTSQEKEKIDKCKRQIQGAETEFSSLVKLSHPNIVRYFAMNSREEEDSIVIDILAEHVSGISLATHLSHSGPVPAHQLRKYTAQLLAGLDYLHSNSVVHKVLSASSVLVDAEGTVKITDYSISKRLADICKEDVFEQARVRFSDSALPYKTGKKGDVWRLGLLLLSLSQGQECGEYPVTIPSDLPADFQDFLKKCVCLDDKERWSPQQLLKHSFINPQPKLPLVEQSPEDSGGQDYIETVIPSNQLPSAAFFSETQKQFSRYFIEFEELQLLGKGAFGAVIKVQNKLDGCCYAVKRIPINPASRHFRRIKGEVTLLSRLHHENIVRYYNAWIERHERPAVPGTPPPDCTPQAQDSPATCGKTSGDTEELGSVEAAAPPPILSSSVEWSTSAERSTSTRFPVTGQDSSSDEEDEDERDGVFSQSFLPASDSDSDIIFDNEDENSKSQNQDEDCNQKDGSHEIEPSVTAEAVHYLYIQMEYCEKSTLRDTIDQGLFRDTSRLWRLFREILDGLAYIHEKGMIHRDLKPVNIFLDSDDHVKIGDFGLATDHLAFTAEGKQDDQAGDGVIKSDPSGHLTGMVGTALYVSPEVQGSTKSAYNQKVDLFSLGIIFFEMSYHPMVTASERIFVLNQLRDPTSPKFPDDFDDGEHTKQKSVISWLLNHDPAKRPTAMELLKSELLPPPQMEESELHEVLHHTLANIDGKAYRTMMSQIFCQHISPAIDYTYDSDILKGNFLIRTAKIQQLVCETIVRVFKRHGAVQLCTPLLLPRNRQIYEHNEAALFMDHSGMLVMLPFDLRVPFARYVARNNILNLKRYCIERVFRPRKLDRFHPKELLECAFDIVTSTTNSSLPTAETIYTIYEIIQEFPALQERNYSIYLNHTMLLKAILLHCGIPEDKLSQVYVILYDAVTEKLTRREVEAKFCNLSLSSNSLCRLYKFIEQKGDLQDLTPTINSLIKQKTGVAQLVKYSLKDLEDVVGLLKKLGVKLQVSINLGLVYKVQQHTGIIFQFLAFSKRRQRVVPEILAAGGRYDLLIPKFRGPQTVGPVPTAVGVSIAIDKIFAAVLNMEEPVTVSSCDLLVVSVGQMSMSRAINLTQKLWTAGITAEIMYDWSQSQEELQEYCRHHEITYVALVSDKEGSHVKVKSFEKERQTEKRVLESDLVDHVMQKLRTKVGDERNFRDASDNLAVQTLKGSFSNASGLFEIHGTTVVPNVIVLAPEKLSASTRRRHEIQVQTRLQTTLANLHQKSSEIEILAVDLPKETILQFLSLEWDADEQAFNTTVKQLLSRLPKQRYLKLVCDEIYNIKVEKKVSVLFLYSYRDDYYRILF.

The disordered stretch occupies residues 1–26 (MAGGRGASGRGRAEPQESYSQRQDHE). An RWD domain is found at 25–137 (HELQALEAIY…HHVQSFLSEH (113 aa)). Positions 146–205 (HEEMLERQAQEKQQRLLEARRKEEQEQREILHEIQRRKEEIKEEKKRKEMAKQERLEITS) form a coiled coil. Serine 230 carries the post-translational modification Phosphoserine. 2 Protein kinase domains span residues 286-538 (VGSD…HSFI) and 589-1000 (FEEL…SELL). ATP-binding positions include 595-603 (LGKGAFGAV) and lysine 618. The interval 661–784 (PAVPGTPPPD…CNQKDGSHEI (124 aa)) is disordered. The residue at position 666 (threonine 666) is a Phosphothreonine. 2 stretches are compositionally biased toward polar residues: residues 673-686 (PQAQ…GKTS) and 704-722 (LSSS…STRF). Composition is skewed to acidic residues over residues 730–739 (SSDEEDEDER) and 753–763 (SDSDIIFDNED). Residues 775 to 784 (CNQKDGSHEI) show a composition bias toward basic and acidic residues. Aspartate 846 (proton acceptor) is an active-site residue. Phosphothreonine is present on threonine 869. Residues threonine 898 and threonine 903 each carry the phosphothreonine; by autocatalysis modification. Positions 1021-1492 (IDGKAYRTMM…DHVMQKLRTK (472 aa)) are histidyl-tRNA synthetase-like. N6-acetyllysine is present on lysine 1258.

The protein belongs to the protein kinase superfamily. Ser/Thr protein kinase family. GCN2 subfamily. Homodimer; homodimerization is important for kinase activation by uncharged tRNAs. Interacts with GCN1; this interaction stimulates EIF2AK4/GCN2 kinase activity and is impaired by IMPACT upon a variety of stress conditions, such as amino acid depletion, UV-C irradiation, proteasome inhibitor treatment and glucose deprivation. Interacts with DNAJC3; this interaction inhibits EIF2AK4/GCN2 kinase activity during endoplasmic reticulum (ER), hypothermic and amino acid-starving stress conditions. Interacts with MAP3K20; activates EIF2AK4/GCN2 kinase activity in response to moderate ribotoxic stress. Autophosphorylated; autophosphorylation on Thr-898 is increased upon amino acid starvation and in UV irradiation cells and inhibited in presence of IMPACT. Expressed in liver. Expressed predominantly in the hippocampal CA1 region and the dentate gyrus, and to a lesser degree in CA3 (at protein level). Expressed in liver, lung, brain, kidney, skeletal muscle and testis. Expressed weakly in heart and spleen. Expressed in the hippocampal CA1 and CA3 regions, the dentate gyrus and cerebellum. Isoform 1 is widely expressed. Isoform 1 is expressed in brain, liver, skeletal muscle and testis. Isoform 3 is expressed in lung, brain, testis, prostate and choroid plexus. Isoform 4 is expressed in muscle, lung, kidney, brain, testis and prostate.

It is found in the cytoplasm. The catalysed reaction is L-seryl-[protein] + ATP = O-phospho-L-seryl-[protein] + ADP + H(+). It carries out the reaction L-threonyl-[protein] + ATP = O-phospho-L-threonyl-[protein] + ADP + H(+). (Microbial infection) Kinase activity is enhanced by alphavirus genomic RNA sequences. Kinase activity is stimulated upon binding to uncharged tRNAs. Activated by serum starvation (in vitro). Its function is as follows. Metabolic-stress sensing protein kinase that phosphorylates the alpha subunit of eukaryotic translation initiation factor 2 (EIF2S1/eIF-2-alpha) in response to low amino acid availability. Plays a role as an activator of the integrated stress response (ISR) required for adaptation to amino acid starvation. EIF2S1/eIF-2-alpha phosphorylation in response to stress converts EIF2S1/eIF-2-alpha into a global protein synthesis inhibitor, leading to a global attenuation of cap-dependent translation, and thus to a reduced overall utilization of amino acids, while concomitantly initiating the preferential translation of ISR-specific mRNAs, such as the transcriptional activator ATF4, and hence allowing ATF4-mediated reprogramming of amino acid biosynthetic gene expression to alleviate nutrient depletion. Required for the translational induction of protein kinase PRKCH following amino acid starvation. Binds uncharged tRNAs. Involved in cell cycle arrest by promoting cyclin D1 mRNA translation repression after the unfolded protein response pathway (UPR) activation or cell cycle inhibitor CDKN1A/p21 mRNA translation activation in response to amino acid deprivation. Plays a role in the consolidation of synaptic plasticity, learning as well as formation of long-term memory. Plays a role in neurite outgrowth inhibition. Plays a role in feeding behavior to maintain amino acid homeostasis; contributes to the innate aversion toward diets of imbalanced amino acid composition. Plays a proapoptotic role in response to glucose deprivation. Promotes global cellular protein synthesis repression in response to UV irradiation independently of the stress-activated protein kinase/c-Jun N-terminal kinase (SAPK/JNK) and p38 MAPK signaling pathways. In terms of biological role, (Microbial infection) Plays a role in the antiviral response against alphavirus infection; impairs early viral mRNA translation of the incoming genomic virus RNA, thus preventing alphavirus replication. (Microbial infection) Plays a role in modulating the adaptive immune response to Yellow fever virus infection; promotes dendritic cells to initiate autophagy and antigene presentation to both CD4(+) and CD8(+) T-cells under amino acid starvation. This is eIF-2-alpha kinase GCN2 from Mus musculus (Mouse).